A 224-amino-acid polypeptide reads, in one-letter code: Proline/serine-rich protein C17A5.10 (224 aa).

A compositionally biased stretch (pro residues) spans 1-10 (MTDDSVPPPS). The interval 1–110 (MTDDSVPPPS…SNYNTAKPPY (110 aa)) is disordered. The span at 31-52 (TSTSAGHPSSSSSTLPNYAASS) shows a compositional bias: low complexity. Composition is skewed to polar residues over residues 53–68 (LNSRPVSSSGSGNAYS), 77–94 (PTSQRPNSWQPGNASTMY), and 101–110 (SNYNTAKPPY).

The protein belongs to the HUA1 family.

It localises to the cytoplasm. Functionally, may be involved in assembly and disassembly of the actin cytoskeleton. The protein is Proline/serine-rich protein C17A5.10 of Schizosaccharomyces pombe (strain 972 / ATCC 24843) (Fission yeast).